The chain runs to 210 residues: N-(5'-phosphoribosyl)anthranilate isomerase (210 aa).

This sequence belongs to the TrpF family.

It catalyses the reaction N-(5-phospho-beta-D-ribosyl)anthranilate = 1-(2-carboxyphenylamino)-1-deoxy-D-ribulose 5-phosphate. Its pathway is amino-acid biosynthesis; L-tryptophan biosynthesis; L-tryptophan from chorismate: step 3/5. This Staphylococcus aureus (strain MRSA252) protein is N-(5'-phosphoribosyl)anthranilate isomerase.